The chain runs to 258 residues: MKDIQSTPAQIAFPIDRVGVKGLKFPIQIQTRDIGMQHTVAIVDMGVDLSVSSRGTHMSRFVEVLQDWNEPLCCESLERLVKQTQKKLQSQHAYIAFFFPYFLHKRAPSTNMLSLFSYDCKLSAKSINYNIEFILELTVPVMTVCPCSKAISHEGAHSQRSEIYIQLRLEQFRFIEDFIVLAESSASSPLYSLLKRADEKYVTEDAFAHPKFVEDVVRNISSKLITVTDVLGFRVEVESFESIHAHNAFAYIEHEFIC.

Belongs to the GTP cyclohydrolase IV family.

The enzyme catalyses GTP + H2O = 7,8-dihydroneopterin 3'-triphosphate + formate + H(+). Its pathway is cofactor biosynthesis; 7,8-dihydroneopterin triphosphate biosynthesis; 7,8-dihydroneopterin triphosphate from GTP: step 1/1. Its function is as follows. Converts GTP to 7,8-dihydroneopterin triphosphate. The polypeptide is GTP cyclohydrolase FolE2 (Lawsonia intracellularis (strain PHE/MN1-00)).